A 158-amino-acid chain; its full sequence is Protein GLUTAMINE DUMPER 1 (158 aa).

The Extracellular portion of the chain corresponds to 1 to 36 (MRPLSVQSKFEDVATSTSVNHHGVTPQSPWHSPVPY). A helical membrane pass occupies residues 37–57 (LFGGLAAMLGLIAFALLILAC). The Cytoplasmic portion of the chain corresponds to 58 to 158 (SYWRLSSSGE…DTGETTTTSH (101 aa)). Residues 65–85 (SGEEDGQNVDEEKESRSGDKA) are disordered. Acidic residues predominate over residues 66-76 (GEEDGQNVDEE). The VIMAG motif lies at 96–100 (VIMAG). Positions 126–158 (ISQEESVAKEEEKMREGEEEKVKDTGETTTTSH) are disordered. Basic and acidic residues predominate over residues 131–151 (SVAKEEEKMREGEEEKVKDTG).

This sequence belongs to the GLUTAMINE DUMPER 1 (TC 9.B.60) family. In terms of assembly, interacts with LOG2. Ubiquitinated by LOG2 (in vitro). In terms of tissue distribution, expressed in the vascular tissues and in hydathodes. Expressed in the phloem and xylem (at the protein level).

The protein resides in the cell membrane. Probable subunit of an amino acid transporter involved in the regulation of the amino acid metabolism. Stimulates amino acid export by activating nonselective amino acid facilitators. Required the interaction with the RING-type E3 ubiquitin-protein ligase LOG2 to fulfill its function. Plays a role in the Gln export at hydathodes, at xylem parenchyma into xylem sap and from mesophyll into leaf apoplasm. Acts upstream genes involved in the salicylic acid (SA) pathway and in the geminivirus-host interaction. The protein is Protein GLUTAMINE DUMPER 1 (GDU1) of Arabidopsis thaliana (Mouse-ear cress).